The chain runs to 179 residues: Large ribosomal subunit protein uL6 (179 aa).

It belongs to the universal ribosomal protein uL6 family. In terms of assembly, part of the 50S ribosomal subunit.

This protein binds to the 23S rRNA, and is important in its secondary structure. It is located near the subunit interface in the base of the L7/L12 stalk, and near the tRNA binding site of the peptidyltransferase center. In Geotalea daltonii (strain DSM 22248 / JCM 15807 / FRC-32) (Geobacter daltonii), this protein is Large ribosomal subunit protein uL6.